The chain runs to 914 residues: High affinity cAMP-specific and IBMX-insensitive 3',5'-cyclic phosphodiesterase 8 (914 aa).

Disordered regions lie at residues 1–27 and 113–138; these read MGCS…PLDA and RRAT…HRKS. A compositionally biased stretch (low complexity) spans 116-129; sequence TGSTGTSGTSSSGG. The region spanning 312–359 is the PAS domain; it reads TQQALYTALHRLKEVVLITDDLLRIQYANRATERLLNMRLDEIISKQL. The 336-residue stretch at 558–893 folds into the PDEase domain; sequence TAAIVPAKMK…SQWKKYDEQG (336 aa). Histidine 640 (proton donor) is an active-site residue. A divalent metal cation-binding residues include histidine 644, histidine 682, aspartate 683, and aspartate 799.

The protein belongs to the cyclic nucleotide phosphodiesterase family. PDE8 subfamily. A divalent metal cation is required as a cofactor. Expressed in Malpighian tubules and head.

It carries out the reaction 3',5'-cyclic AMP + H2O = AMP + H(+). Its pathway is purine metabolism; 3',5'-cyclic AMP degradation; AMP from 3',5'-cyclic AMP: step 1/1. Hydrolyzes the second messenger cAMP, which is a key regulator of many important physiological processes. Involved in the positive regulation of MAP kinase signaling and in inhibiting oxidative stress-induced cell death. The protein is High affinity cAMP-specific and IBMX-insensitive 3',5'-cyclic phosphodiesterase 8 of Drosophila melanogaster (Fruit fly).